A 298-amino-acid polypeptide reads, in one-letter code: 4-hydroxy-tetrahydrodipicolinate synthase (298 aa).

Thr-48 contributes to the pyruvate binding site. Residue Tyr-137 is the Proton donor/acceptor of the active site. Catalysis depends on Lys-166, which acts as the Schiff-base intermediate with substrate. Position 207 (Ile-207) interacts with pyruvate.

It belongs to the DapA family. Homotetramer; dimer of dimers.

The protein resides in the cytoplasm. The enzyme catalyses L-aspartate 4-semialdehyde + pyruvate = (2S,4S)-4-hydroxy-2,3,4,5-tetrahydrodipicolinate + H2O + H(+). Its pathway is amino-acid biosynthesis; L-lysine biosynthesis via DAP pathway; (S)-tetrahydrodipicolinate from L-aspartate: step 3/4. Catalyzes the condensation of (S)-aspartate-beta-semialdehyde [(S)-ASA] and pyruvate to 4-hydroxy-tetrahydrodipicolinate (HTPA). The protein is 4-hydroxy-tetrahydrodipicolinate synthase of Campylobacter jejuni subsp. doylei (strain ATCC BAA-1458 / RM4099 / 269.97).